The primary structure comprises 490 residues: Actin-related protein 6 (490 aa).

Belongs to the actin family. ARP6 subfamily.

The protein resides in the cytoplasm. The protein localises to the cytoskeleton. This is Actin-related protein 6 from Dictyostelium discoideum (Social amoeba).